The sequence spans 130 residues: Small ribosomal subunit protein uS8 (130 aa).

This sequence belongs to the universal ribosomal protein uS8 family. As to quaternary structure, part of the 30S ribosomal subunit.

Its function is as follows. One of the primary rRNA binding proteins, it binds directly to 16S rRNA central domain where it helps coordinate assembly of the platform of the 30S subunit. In Nitrosopumilus maritimus (strain SCM1), this protein is Small ribosomal subunit protein uS8.